Reading from the N-terminus, the 485-residue chain is Glutamate--tRNA ligase 1 (485 aa).

A 'HIGH' region motif is present at residues 10-20 (PSPTGAIHIGN). The 'KMSKS' region motif lies at 252 to 256 (KLSKR). Lys255 contributes to the ATP binding site.

It belongs to the class-I aminoacyl-tRNA synthetase family. Glutamate--tRNA ligase type 1 subfamily. In terms of assembly, monomer.

The protein localises to the cytoplasm. The catalysed reaction is tRNA(Glu) + L-glutamate + ATP = L-glutamyl-tRNA(Glu) + AMP + diphosphate. Catalyzes the attachment of glutamate to tRNA(Glu) in a two-step reaction: glutamate is first activated by ATP to form Glu-AMP and then transferred to the acceptor end of tRNA(Glu). The sequence is that of Glutamate--tRNA ligase 1 from Thermoanaerobacter sp. (strain X514).